We begin with the raw amino-acid sequence, 455 residues long: Gamma-aminobutyric acid receptor subunit alpha-1 (455 aa).

Positions 1-27 (MKRLLVLCDCLWAWSLLLNALTERSYG) are cleaved as a signal peptide. Residues 28–253 (QTSSQDELKD…FHLKRKIGYF (226 aa)) are Extracellular-facing. The N-linked (GlcNAc...) asparagine glycan is linked to asparagine 38. Arginine 94 contributes to the 4-aminobutanoate binding site. Asparagine 138 is a glycosylation site (N-linked (GlcNAc...) asparagine). A 4-aminobutanoate-binding site is contributed by threonine 157. Cysteine 166 and cysteine 180 are oxidised to a cystine. A helical membrane pass occupies residues 254–274 (VIQTYLPCIMTVILSQVSFWL). Over 275 to 279 (NRESV) the chain is Cytoplasmic. The helical transmembrane segment at 280-301 (PARTVFGVTTVLTMTTLSISAR) threads the bilayer. Residues 302–311 (NSLPKVAYAT) are Extracellular-facing. The chain crosses the membrane as a helical span at residues 312-333 (AMDWFIAVCYAFVFSALIEFAT). Over 334–420 (VNYFTKRGYA…TFNSVSKIDR (87 aa)) the chain is Cytoplasmic. Residues 421-440 (LSRIAFPLLFGIFNLVYWAT) traverse the membrane as a helical segment. Topologically, residues 441–455 (YLNREPQLKAPTPHQ) are extracellular.

The protein belongs to the ligand-gated ion channel (TC 1.A.9) family. Gamma-aminobutyric acid receptor (TC 1.A.9.5) subfamily. GABRA1 sub-subfamily. As to quaternary structure, heteropentamer, formed by a combination of alpha (GABRA1-6), beta (GABRB1-3), gamma (GABRG1-3), delta (GABRD), epsilon (GABRE), rho (GABRR1-3), pi (GABRP) and theta (GABRQ) subunits, each subunit exhibiting distinct physiological and pharmacological properties. In terms of tissue distribution, brain.

The protein resides in the postsynaptic cell membrane. It is found in the cell membrane. It catalyses the reaction chloride(in) = chloride(out). Allosterically activated by benzodiazepines, the neuroanesthetic alphaxalone and pentobarbital. Inhibited by the antagonist bicuculline. Potentiated by histamine. Alpha subunit of the heteropentameric ligand-gated chloride channel gated by gamma-aminobutyric acid (GABA), a major inhibitory neurotransmitter in the brain. GABA-gated chloride channels, also named GABA(A) receptors (GABAAR), consist of five subunits arranged around a central pore and contain GABA active binding site(s) located at the alpha and beta subunit interface(s). When activated by GABA, GABAARs selectively allow the flow of chloride anions across the cell membrane down their electrochemical gradient. Chloride influx into the postsynaptic neuron following GABAAR opening decreases the neuron ability to generate a new action potential, thereby reducing nerve transmission. The GABAARs can also initiate the formation of functional inhibitory GABAergic synapses. GABAARs function also as histamine receptor where histamine binds at the interface of two neighboring beta subunits and potentiates GABA response. In Gallus gallus (Chicken), this protein is Gamma-aminobutyric acid receptor subunit alpha-1 (GABRA1).